Here is a 405-residue protein sequence, read N- to C-terminus: Glucoside xylosyltransferase 1 (405 aa).

At 1–2 (MR) the chain is on the cytoplasmic side. The chain crosses the membrane as a helical; Signal-anchor for type II membrane protein span at residues 3 to 23 (IYLRTFGLCIVVALLSLVFLF). Topologically, residues 24–405 (SKHDEGSFSA…RLQRATPPGD (382 aa)) are lumenal. A disordered region spans residues 46 to 65 (SFNGAKAKQRPTATTSHRDV). 4 N-linked (GlcNAc...) asparagine glycosylation sites follow: Asn202, Asn243, Asn277, and Asn372.

It belongs to the glycosyltransferase 8 family.

It is found in the membrane. The catalysed reaction is 3-O-(beta-D-glucosyl)-L-seryl-[EGF-like domain protein] + UDP-alpha-D-xylose = 3-O-[alpha-D-xylosyl-(1-&gt;3)-beta-D-glucosyl]-L-seryl-[EGF-like domain protein] + UDP + H(+). Glycosyltransferase which elongates the O-linked glucose attached to EGF-like repeats in the extracellular domain of Notch proteins by catalyzing the addition of xylose. The sequence is that of Glucoside xylosyltransferase 1 (gxylt1) from Danio rerio (Zebrafish).